Reading from the N-terminus, the 159-residue chain is Phosphopantetheine adenylyltransferase (159 aa).

Residue serine 9 participates in substrate binding. Residues 9–10 (SF) and histidine 17 each bind ATP. Lysine 41, isoleucine 75, and lysine 89 together coordinate substrate. Residues 90–92 (GLR), glutamate 100, and 124–130 (LEHISSS) contribute to the ATP site.

It belongs to the bacterial CoaD family. As to quaternary structure, homohexamer. The cofactor is Mg(2+).

The protein localises to the cytoplasm. The enzyme catalyses (R)-4'-phosphopantetheine + ATP + H(+) = 3'-dephospho-CoA + diphosphate. The protein operates within cofactor biosynthesis; coenzyme A biosynthesis; CoA from (R)-pantothenate: step 4/5. Its function is as follows. Reversibly transfers an adenylyl group from ATP to 4'-phosphopantetheine, yielding dephospho-CoA (dPCoA) and pyrophosphate. This Bifidobacterium animalis subsp. lactis (strain AD011) protein is Phosphopantetheine adenylyltransferase.